Reading from the N-terminus, the 764-residue chain is 5-methyltetrahydropteroyltriglutamate--homocysteine methyltransferase (764 aa).

5-methyltetrahydropteroyltri-L-glutamate-binding positions include Arg-16 to Lys-19 and Lys-112. L-homocysteine-binding positions include Ile-431–Ser-433 and Glu-484. L-methionine is bound by residues Ile-431–Ser-433 and Glu-484. 5-methyltetrahydropteroyltri-L-glutamate-binding positions include Arg-515–Cys-516 and Trp-561. Asp-599 serves as a coordination point for L-homocysteine. Asp-599 is a binding site for L-methionine. Glu-605 contributes to the 5-methyltetrahydropteroyltri-L-glutamate binding site. Residues His-641, Cys-643, and Glu-665 each contribute to the Zn(2+) site. The Proton donor role is filled by His-694. Cys-726 is a Zn(2+) binding site.

Belongs to the vitamin-B12 independent methionine synthase family. Zn(2+) is required as a cofactor.

The enzyme catalyses 5-methyltetrahydropteroyltri-L-glutamate + L-homocysteine = tetrahydropteroyltri-L-glutamate + L-methionine. The protein operates within amino-acid biosynthesis; L-methionine biosynthesis via de novo pathway; L-methionine from L-homocysteine (MetE route): step 1/1. Its function is as follows. Catalyzes the transfer of a methyl group from 5-methyltetrahydrofolate to homocysteine resulting in methionine formation. This Paraburkholderia xenovorans (strain LB400) protein is 5-methyltetrahydropteroyltriglutamate--homocysteine methyltransferase.